Reading from the N-terminus, the 566-residue chain is Insulinoma-associated protein 2 (566 aa).

The tract at residues 1–20 (MPRGFLVKRTKRTGGLYRVR) is SNAG domain. The interval 32-117 (QGAPPFLEEA…PSPSPAKPAG (86 aa)) is disordered. The segment covering 103–113 (GPSPSPSPSPA) has biased composition (pro residues). The C2H2-type 1; atypical zinc-finger motif lies at 263 to 283 (FICQLCKEQYADPFALAQHRC). Residues 291–313 (YRCPECDKVFSCPANLASHRRWH) form a C2H2-type 2 zinc finger. The interval 310–418 (RRWHKPRPAA…RRVPVPGSTS (109 aa)) is disordered. The span at 318 to 348 (AAANAATVSSADGKPPSSSSSSSRDSGAIAS) shows a compositional bias: low complexity. Basic and acidic residues predominate over residues 352-369 (EGKENSRIERTADQHPQA). C2H2-type zinc fingers lie at residues 426–448 (FVCP…LSTH), 470–492 (FACP…RLWH), and 525–548 (FSCK…NKCH).

As to expression, expressed in heart, liver, skeletal muscle, kidney and pancreas, and, to a lesser extent, in brain, lung and spleen. In the pancreas, expressed in islet cells, including insulin- and glucagon-producing alpha- and beta-cells, but not in acinar cells (at protein level). Detected in adrenal glands, particularly in the deeper layer of the cortex (at protein level).

Its subcellular location is the cytoplasm. The protein resides in the nucleus. Functionally, may function as a growth suppressor or tumor suppressor in liver cells and in certain neurons. This chain is Insulinoma-associated protein 2 (INSM2), found in Homo sapiens (Human).